The chain runs to 417 residues: Serine hydroxymethyltransferase (417 aa).

Residues L112 and 116–118 each bind (6S)-5,6,7,8-tetrahydrofolate; that span reads GHL. K221 carries the N6-(pyridoxal phosphate)lysine modification. (6S)-5,6,7,8-tetrahydrofolate is bound at residue E247.

It belongs to the SHMT family. As to quaternary structure, homodimer. It depends on pyridoxal 5'-phosphate as a cofactor.

The protein localises to the cytoplasm. The catalysed reaction is (6R)-5,10-methylene-5,6,7,8-tetrahydrofolate + glycine + H2O = (6S)-5,6,7,8-tetrahydrofolate + L-serine. The protein operates within one-carbon metabolism; tetrahydrofolate interconversion. It participates in amino-acid biosynthesis; glycine biosynthesis; glycine from L-serine: step 1/1. Functionally, catalyzes the reversible interconversion of serine and glycine with tetrahydrofolate (THF) serving as the one-carbon carrier. This reaction serves as the major source of one-carbon groups required for the biosynthesis of purines, thymidylate, methionine, and other important biomolecules. Also exhibits THF-independent aldolase activity toward beta-hydroxyamino acids, producing glycine and aldehydes, via a retro-aldol mechanism. The protein is Serine hydroxymethyltransferase of Borrelia turicatae (strain 91E135).